The primary structure comprises 269 residues: Leucinostatins biosynthesis cluster protein T (269 aa).

The N-terminal stretch at 1–15 (MHIILTGTGLVGAIA) is a signal peptide. N254 carries an N-linked (GlcNAc...) asparagine glycan.

Part of the gene cluster that mediates the biosynthesis of the lipopeptide antibiotics leucinostatins that show extensive biological activities, including antimalarial, antiviral, antibacterial, antifungal, and antitumor activities, as well as phytotoxic. The function of lcsT within the leucinostatins biosynthesis has not been identified yet. In Purpureocillium lilacinum (Paecilomyces lilacinus), this protein is Leucinostatins biosynthesis cluster protein T.